The chain runs to 330 residues: Aspartate--ammonia ligase (330 aa).

This sequence belongs to the class-II aminoacyl-tRNA synthetase family. AsnA subfamily.

The protein resides in the cytoplasm. The catalysed reaction is L-aspartate + NH4(+) + ATP = L-asparagine + AMP + diphosphate + H(+). It functions in the pathway amino-acid biosynthesis; L-asparagine biosynthesis; L-asparagine from L-aspartate (ammonia route): step 1/1. The protein is Aspartate--ammonia ligase of Actinobacillus succinogenes (strain ATCC 55618 / DSM 22257 / CCUG 43843 / 130Z).